The following is a 493-amino-acid chain: Galactose-1-phosphate uridylyltransferase 2 (493 aa).

Belongs to the galactose-1-phosphate uridylyltransferase type 2 family.

It is found in the cytoplasm. The catalysed reaction is alpha-D-galactose 1-phosphate + UDP-alpha-D-glucose = alpha-D-glucose 1-phosphate + UDP-alpha-D-galactose. It participates in carbohydrate metabolism; galactose metabolism. This is Galactose-1-phosphate uridylyltransferase 2 (galT2) from Streptococcus pneumoniae serotype 4 (strain ATCC BAA-334 / TIGR4).